Consider the following 245-residue polypeptide: Pyridoxine 5'-phosphate synthase (245 aa).

Asparagine 9 lines the 3-amino-2-oxopropyl phosphate pocket. 1-deoxy-D-xylulose 5-phosphate is bound at residue aspartate 11–histidine 12. Residue arginine 20 coordinates 3-amino-2-oxopropyl phosphate. Catalysis depends on histidine 45, which acts as the Proton acceptor. The 1-deoxy-D-xylulose 5-phosphate site is built by arginine 47 and histidine 52. The Proton acceptor role is filled by glutamate 72. Threonine 102 is a binding site for 1-deoxy-D-xylulose 5-phosphate. Residue histidine 193 is the Proton donor of the active site. Residues glycine 194 and glycine 215–histidine 216 contribute to the 3-amino-2-oxopropyl phosphate site.

Belongs to the PNP synthase family. As to quaternary structure, homooctamer; tetramer of dimers.

The protein localises to the cytoplasm. The enzyme catalyses 3-amino-2-oxopropyl phosphate + 1-deoxy-D-xylulose 5-phosphate = pyridoxine 5'-phosphate + phosphate + 2 H2O + H(+). It participates in cofactor biosynthesis; pyridoxine 5'-phosphate biosynthesis; pyridoxine 5'-phosphate from D-erythrose 4-phosphate: step 5/5. Catalyzes the complicated ring closure reaction between the two acyclic compounds 1-deoxy-D-xylulose-5-phosphate (DXP) and 3-amino-2-oxopropyl phosphate (1-amino-acetone-3-phosphate or AAP) to form pyridoxine 5'-phosphate (PNP) and inorganic phosphate. This is Pyridoxine 5'-phosphate synthase from Shewanella oneidensis (strain ATCC 700550 / JCM 31522 / CIP 106686 / LMG 19005 / NCIMB 14063 / MR-1).